Reading from the N-terminus, the 497-residue chain is O-acetyltransferase PaAT-1 (497 aa).

Residue N35 is glycosylated (N-linked (GlcNAc...) asparagine). Helical transmembrane passes span 69–89 (GISA…GWHI), 107–127 (LLIS…YSLS), 157–177 (LFVP…LNWY), 241–261 (LWTL…LMAF), 278–298 (VLFQ…GMLI), 329–349 (AIGV…HLAF), 375–395 (PIAA…QVLF), 406–426 (ISFA…HALG), and 443–463 (VAIS…ADFV).

Belongs to the acyltransferase 3 family.

The protein localises to the membrane. The protein operates within mycotoxin biosynthesis. Functionally, O-acetyltransferase; part of the 2 gene clusters that mediate the biosynthesis of fusicoccins, diterpene glucosides that display phytohormone-like activity and function as potent activators of plasma membrane H(+)-ATPases in plants by modifying 14-3-3 proteins and cause the plant disease constriction canker. The first step in the pathway is performed by the fusicoccadiene synthase PaFS that possesses both prenyl transferase and terpene cyclase activity, converting isopentenyl diphosphate and dimethylallyl diphosphate into geranylgeranyl diphosphate (GGDP) and successively converting GGDP into fusicocca-2,10(14)-diene, a precursor for fusicoccin H. The second step is the oxidation at the C-8 position by the cytochrome P450 monooxygenase PaP450-2 to yield fusicocca-2,10(14)-diene-8-beta-ol. The cytochrome P450 monooxygenase PaP450-1 then catalyzes the hydroxylation at the C-16 position to produce fusicocca-2,10(14)-diene-8-beta,16-diol. The dioxygenase fc-dox then catalyzes the 16-oxydation of fusicocca-2,10(14)-diene-8-beta,16-diol to yield an aldehyde (8-beta-hydroxyfusicocca-1,10(14)-dien-16-al). The short-chain dehydrogenase/reductase fc-sdr catalyzes the reduction of the aldehyde to yield fusicocca-1,10(14)-diene-8-beta,16-diol. The next step is the hydroxylation at C-9 performed by the cytochrome P450 monooxygenase PaP450-3 that leads to fusicoccin H aglycon which is glycosylated to fusicoccin H by the O-glycosyltransferase PaGT. Hydroxylation at C-12 by the cytochrome P450 monooxygenase PaP450-4 leads then to the production of fusicoccin Q and is followed by methylation by the O-methyltransferase PaMT to yield fusicoccin P. Fusicoccin P is further converted to fusicoccin J via prenylation by the O-glucose prenyltransferase PaPT. Cytochrome P450 monooxygenase PaP450-5 then performs hydroxylation at C-19 to yield dideacetyl-fusicoccin A which is acetylated to 3'-O-deacetyl-fusicoccin A by the O-acetyltransferase PaAT-2. Finally, a another acetylation by the O-acetyltransferase PaAT-1 yields fusicoccin A. This is O-acetyltransferase PaAT-1 from Phomopsis amygdali (Fusicoccum amygdali).